The primary structure comprises 223 residues: Small ribosomal subunit protein uS5 (223 aa).

Positions 1–48 are disordered; that stretch reads MPGRQRRDGGSGPAGQNGPNSGDNSNARGDNRGGGRDRRDGGRGGNAA. Positions 29–42 are enriched in basic and acidic residues; that stretch reads GDNRGGGRDRRDGG. The 64-residue stretch at 53-116 folds into the S5 DRBM domain; it reads FIERVVTINR…EEARKSFFRV (64 aa).

This sequence belongs to the universal ribosomal protein uS5 family. Part of the 30S ribosomal subunit. Contacts proteins S4 and S8.

In terms of biological role, with S4 and S12 plays an important role in translational accuracy. Its function is as follows. Located at the back of the 30S subunit body where it stabilizes the conformation of the head with respect to the body. This is Small ribosomal subunit protein uS5 from Rhodococcus erythropolis (strain PR4 / NBRC 100887).